A 732-amino-acid chain; its full sequence is Adducin-related protein 1 (732 aa).

2 disordered regions span residues 1–22 (MIGR…DPEY) and 684–732 (TRFS…KKDK). Polar residues predominate over residues 685–705 (RFSSTQGTSEGNTTSRSCTTA). The span at 716–732 (KKKKKKGFLSFMRKKDK) shows a compositional bias: basic residues.

This sequence belongs to the aldolase class II family. Adducin subfamily.

Its subcellular location is the cytoplasm. The protein resides in the cytoskeleton. It localises to the cell membrane. Its function is as follows. Membrane-cytoskeleton-associated protein that promotes the assembly of the spectrin-actin network. Plays a role in time-dependent memmory loss and the retention of conditioned behavior over time. The protein is Adducin-related protein 1 of Caenorhabditis elegans.